The chain runs to 436 residues: UPF0597 protein YhaM (436 aa).

It belongs to the UPF0597 family.

In Escherichia coli (strain SE11), this protein is UPF0597 protein YhaM.